A 292-amino-acid chain; its full sequence is Phosphatidylglycerol--prolipoprotein diacylglyceryl transferase (292 aa).

4 helical membrane-spanning segments follow: residues 18–38 (LFGA…GLLI), 67–87 (LLTW…VLFY), 105–125 (GGMS…AFCL), and 129–149 (ISIL…LFLG). Arginine 150 is an a 1,2-diacyl-sn-glycero-3-phospho-(1'-sn-glycerol) binding site. The next 3 membrane-spanning stretches (helical) occupy residues 193-213 (QLYE…ILIW), 222-242 (GAVT…VEFV), and 266-286 (GLTM…YFML).

It belongs to the Lgt family.

It localises to the cell inner membrane. It carries out the reaction L-cysteinyl-[prolipoprotein] + a 1,2-diacyl-sn-glycero-3-phospho-(1'-sn-glycerol) = an S-1,2-diacyl-sn-glyceryl-L-cysteinyl-[prolipoprotein] + sn-glycerol 1-phosphate + H(+). It functions in the pathway protein modification; lipoprotein biosynthesis (diacylglyceryl transfer). Its function is as follows. Catalyzes the transfer of the diacylglyceryl group from phosphatidylglycerol to the sulfhydryl group of the N-terminal cysteine of a prolipoprotein, the first step in the formation of mature lipoproteins. This is Phosphatidylglycerol--prolipoprotein diacylglyceryl transferase from Cereibacter sphaeroides (strain ATCC 17025 / ATH 2.4.3) (Rhodobacter sphaeroides).